Here is a 236-residue protein sequence, read N- to C-terminus: tRNA1(Val) (adenine(37)-N6)-methyltransferase (236 aa).

The protein belongs to the methyltransferase superfamily. tRNA (adenine-N(6)-)-methyltransferase family.

It localises to the cytoplasm. It carries out the reaction adenosine(37) in tRNA1(Val) + S-adenosyl-L-methionine = N(6)-methyladenosine(37) in tRNA1(Val) + S-adenosyl-L-homocysteine + H(+). In terms of biological role, specifically methylates the adenine in position 37 of tRNA(1)(Val) (anticodon cmo5UAC). The chain is tRNA1(Val) (adenine(37)-N6)-methyltransferase from Actinobacillus pleuropneumoniae serotype 5b (strain L20).